We begin with the raw amino-acid sequence, 229 residues long: Large ribosomal subunit protein uL1 (229 aa).

The protein belongs to the universal ribosomal protein uL1 family. In terms of assembly, part of the 50S ribosomal subunit.

Its function is as follows. Binds directly to 23S rRNA. The L1 stalk is quite mobile in the ribosome, and is involved in E site tRNA release. Functionally, protein L1 is also a translational repressor protein, it controls the translation of the L11 operon by binding to its mRNA. The sequence is that of Large ribosomal subunit protein uL1 from Actinobacillus pleuropneumoniae serotype 5b (strain L20).